The following is a 450-amino-acid chain: Allergen Fus c 3 (450 aa).

Disordered stretches follow at residues 18–87, 99–148, 185–377, and 398–426; these read EPEM…SRAQ, DLHA…HLPP, SGHP…NLVE, and QIRHGDNGGGNGNVDNESEQANDLDRRVS. Over residues 31-46 the composition is skewed to polar residues; sequence PHQQPISSPNRTSRNT. Positions 101–112 are enriched in low complexity; sequence HAPSHPSHLSHG. A compositionally biased stretch (basic and acidic residues) spans 113–125; that stretch reads APHEQEHAHEIQR. The segment covering 272 to 286 has biased composition (basic residues); the sequence is RPRKPARARRQKKEP. Polar residues predominate over residues 291–304; sequence DASQGARSSSTGGT. Residues 305 to 341 are compositionally biased toward low complexity; it reads AHSVSDAASPSSTSHQSRASLTSKSASMTSAASTASS. Positions 356-377 are enriched in basic and acidic residues; that stretch reads TLDKPNDTAEDRRTRASHNLVE. Residues 368-441 form the bHLH domain; it reads RTRASHNLVE…EMARRHIEAL (74 aa).

The polypeptide is Allergen Fus c 3 (Fusarium culmorum).